Consider the following 201-residue polypeptide: Glycerol-3-phosphate acyltransferase (201 aa).

5 helical membrane-spanning segments follow: residues 5–25 (LLGAVLVAAGYLAGSIPFGVV), 55–75 (KMGVLVLVLDAAKAIVPILLA), 88–108 (WSTAVAVAAFVGHLFPVWLGF), 118–138 (LGIFAVLAPWAALAGLVGYAV), and 164–184 (TYGVRHPVPWAGLAIALLIFL).

This sequence belongs to the PlsY family. In terms of assembly, probably interacts with PlsX.

The protein resides in the cell inner membrane. It carries out the reaction an acyl phosphate + sn-glycerol 3-phosphate = a 1-acyl-sn-glycero-3-phosphate + phosphate. The protein operates within lipid metabolism; phospholipid metabolism. Its function is as follows. Catalyzes the transfer of an acyl group from acyl-phosphate (acyl-PO(4)) to glycerol-3-phosphate (G3P) to form lysophosphatidic acid (LPA). This enzyme utilizes acyl-phosphate as fatty acyl donor, but not acyl-CoA or acyl-ACP. The protein is Glycerol-3-phosphate acyltransferase of Anaeromyxobacter dehalogenans (strain 2CP-C).